The chain runs to 197 residues: Signal-regulatory protein delta (197 aa).

The N-terminal stretch at 1-29 (MPIPASPLHPPLPSLLLYLLLELAGVTHV) is a signal peptide. The Ig-like V-type domain occupies 31–135 (HVQQTEMSQT…IKEYQSGRGT (105 aa)). A disulfide bond links Cys-51 and Cys-117. The segment at 139 to 158 (VTEQNPRPPKNRPAGRAGSR) is disordered. The N-linked (GlcNAc...) asparagine glycan is linked to Asn-174.

It is found in the secreted. The polypeptide is Signal-regulatory protein delta (SIRPD) (Homo sapiens (Human)).